We begin with the raw amino-acid sequence, 173 residues long: MDADVNLKTLPYRKCVGIVVFNHEGKVWVGRRLMTLAHADIDRSHRWQLPQGGIDEDEKPLDAAYRELYEETGIRSVKLIKEAQNWFYYDFPQELVACTLSNKYCGQMQKWFAFQFTGELSEIVINPPPDGNKAEFDQWKWIDLESLPSIAVSFKKHVYMKVVSEFRGSLRSL.

A Nudix hydrolase domain is found at 11-164; it reads PYRKCVGIVV…KKHVYMKVVS (154 aa). The short motif at 52 to 73 is the Nudix box element; the sequence is GGIDEDEKPLDAAYRELYEETG.

The protein belongs to the Nudix hydrolase family. RppH subfamily. A divalent metal cation is required as a cofactor.

In terms of biological role, accelerates the degradation of transcripts by removing pyrophosphate from the 5'-end of triphosphorylated RNA, leading to a more labile monophosphorylated state that can stimulate subsequent ribonuclease cleavage. This Bartonella tribocorum (strain CIP 105476 / IBS 506) protein is RNA pyrophosphohydrolase.